Consider the following 113-residue polypeptide: UPF0251 protein Teth514_1147 (113 aa).

Belongs to the UPF0251 family.

The polypeptide is UPF0251 protein Teth514_1147 (Thermoanaerobacter sp. (strain X514)).